A 414-amino-acid polypeptide reads, in one-letter code: Probable protein phosphatase 2C 80 (414 aa).

One can recognise a PPM-type phosphatase domain in the interval 174 to 411 (SCYLPHPEKE…DDITAVVSYV (238 aa)). Mn(2+) is bound by residues aspartate 204, glycine 205, aspartate 336, and aspartate 402.

It belongs to the PP2C family. It depends on Mg(2+) as a cofactor. Mn(2+) is required as a cofactor.

The enzyme catalyses O-phospho-L-seryl-[protein] + H2O = L-seryl-[protein] + phosphate. It carries out the reaction O-phospho-L-threonyl-[protein] + H2O = L-threonyl-[protein] + phosphate. In Arabidopsis thaliana (Mouse-ear cress), this protein is Probable protein phosphatase 2C 80.